Reading from the N-terminus, the 199-residue chain is Holliday junction branch migration complex subunit RuvA (199 aa).

Positions 1–64 are domain I; it reads MIGRLRGILL…DDAHLLYAFA (64 aa). The interval 65 to 143 is domain II; the sequence is SEKERGLFRS…DMPESGVAGM (79 aa). Residues 144-150 form a flexible linker region; sequence RPDRVDG. The segment at 151–199 is domain III; it reads SAPGTVAEAVSALVALGYKPNEASRAVRRLDTEALTTEEIIRQALQRML.

The protein belongs to the RuvA family. Homotetramer. Forms an RuvA(8)-RuvB(12)-Holliday junction (HJ) complex. HJ DNA is sandwiched between 2 RuvA tetramers; dsDNA enters through RuvA and exits via RuvB. An RuvB hexamer assembles on each DNA strand where it exits the tetramer. Each RuvB hexamer is contacted by two RuvA subunits (via domain III) on 2 adjacent RuvB subunits; this complex drives branch migration. In the full resolvosome a probable DNA-RuvA(4)-RuvB(12)-RuvC(2) complex forms which resolves the HJ.

The protein resides in the cytoplasm. Its function is as follows. The RuvA-RuvB-RuvC complex processes Holliday junction (HJ) DNA during genetic recombination and DNA repair, while the RuvA-RuvB complex plays an important role in the rescue of blocked DNA replication forks via replication fork reversal (RFR). RuvA specifically binds to HJ cruciform DNA, conferring on it an open structure. The RuvB hexamer acts as an ATP-dependent pump, pulling dsDNA into and through the RuvAB complex. HJ branch migration allows RuvC to scan DNA until it finds its consensus sequence, where it cleaves and resolves the cruciform DNA. This chain is Holliday junction branch migration complex subunit RuvA, found in Nitrosococcus oceani (strain ATCC 19707 / BCRC 17464 / JCM 30415 / NCIMB 11848 / C-107).